Consider the following 257-residue polypeptide: 5-keto-4-deoxy-D-glucarate aldolase (257 aa).

His51 acts as the Proton acceptor in catalysis. Position 152 (Gln152) interacts with substrate. Glu154 serves as a coordination point for Mg(2+). Residues Ser179 and Asp180 each contribute to the substrate site. Asp180 contacts Mg(2+).

It belongs to the HpcH/HpaI aldolase family. KDGluc aldolase subfamily. As to quaternary structure, homohexamer; trimer of dimers. It depends on Mg(2+) as a cofactor.

It carries out the reaction 5-dehydro-4-deoxy-D-glucarate = 2-hydroxy-3-oxopropanoate + pyruvate. It catalyses the reaction 2-dehydro-3-deoxy-D-glucarate = 2-hydroxy-3-oxopropanoate + pyruvate. It functions in the pathway carbohydrate acid metabolism; galactarate degradation; D-glycerate from galactarate: step 2/3. Catalyzes the reversible retro-aldol cleavage of both 5-keto-4-deoxy-D-glucarate and 2-keto-3-deoxy-D-glucarate to pyruvate and tartronic semialdehyde. This is 5-keto-4-deoxy-D-glucarate aldolase from Citrobacter koseri (strain ATCC BAA-895 / CDC 4225-83 / SGSC4696).